A 226-amino-acid polypeptide reads, in one-letter code: Leucyl/phenylalanyl-tRNA--protein transferase (226 aa).

It belongs to the L/F-transferase family.

The protein resides in the cytoplasm. The enzyme catalyses N-terminal L-lysyl-[protein] + L-leucyl-tRNA(Leu) = N-terminal L-leucyl-L-lysyl-[protein] + tRNA(Leu) + H(+). The catalysed reaction is N-terminal L-arginyl-[protein] + L-leucyl-tRNA(Leu) = N-terminal L-leucyl-L-arginyl-[protein] + tRNA(Leu) + H(+). It catalyses the reaction L-phenylalanyl-tRNA(Phe) + an N-terminal L-alpha-aminoacyl-[protein] = an N-terminal L-phenylalanyl-L-alpha-aminoacyl-[protein] + tRNA(Phe). Functionally, functions in the N-end rule pathway of protein degradation where it conjugates Leu, Phe and, less efficiently, Met from aminoacyl-tRNAs to the N-termini of proteins containing an N-terminal arginine or lysine. The polypeptide is Leucyl/phenylalanyl-tRNA--protein transferase (Bradyrhizobium diazoefficiens (strain JCM 10833 / BCRC 13528 / IAM 13628 / NBRC 14792 / USDA 110)).